Consider the following 402-residue polypeptide: MVLEATMICIDNSEWMRNGDYSPSRFQAQADAVNLICGAKTQSNPENTVGVMTMAGKGVRVLVTPTSDLGKILACMHGLEVGAEANLAAAIQVAQLALKHRQNKRQQQRIIAFIGSPVKYDKKVLETIGKKLKKNNVALDIVDFGETDDDKPEKLEALISAVNSSDSSHIVHVPPGENALSDVLISTPIFTGEEGGSGFAASAAAAAATGAAGFEFDVDPNVDPELALALRLSMEEERARQEAIAKKAAEESSGAENKDHASSSNADSVMAEAEPASNAADDKKDQPKEDDDAQLLQQALAMSMEEGSSGAAAADAAMAEAAVDDQDLALALQMSVQDAGGSSQSDMSKVFEDRSFVTSILNSLPGVDPNDPSVKDLLASLHGQGEQEKKEDKSDKPEDEKK.

Residues 5–189 (ATMICIDNSE…LSDVLISTPI (185 aa)) form the VWFA domain. The 20-residue stretch at 221–240 (NVDPELALALRLSMEEERAR) folds into the UIM 1 domain. A compositionally biased stretch (basic and acidic residues) spans 241–261 (QEAIAKKAAEESSGAENKDHA). Disordered regions lie at residues 241–292 (QEAI…EDDD) and 302–321 (MSME…MAEA). UIM domains follow at residues 291–310 (DDAQ…GSSG) and 323–342 (VDDQ…AGGS). The segment at 363–402 (SLPGVDPNDPSVKDLLASLHGQGEQEKKEDKSDKPEDEKK) is disordered. Positions 385–402 (GEQEKKEDKSDKPEDEKK) are enriched in basic and acidic residues.

It belongs to the proteasome subunit S5A family. In terms of assembly, component of the 19S regulatory particle (RP/PA700) base subcomplex of the 26S proteasome. The 26S proteasome is composed of a core protease (CP), known as the 20S proteasome, capped at one or both ends by the 19S regulatory particle (RP/PA700). The RP/PA700 complex is composed of at least 17 different subunits in two subcomplexes, the base and the lid, which form the portions proximal and distal to the 20S proteolytic core, respectively. Interacts with PI4KG4.

Its function is as follows. Plays a role in maintaining the structural integrity of the 19S regulatory particle (RP), subcomplex of the 26S proteasome. Plays a major role in both the direct and indirect recognition of ubiquitinated substrates of ubiquitin/26S proteasome-mediated proteolysis (UPP). Binds and presumably selects ubiquitin-conjugates for destruction. The polypeptide is 26S proteasome non-ATPase regulatory subunit 4 homolog (Oryza sativa subsp. japonica (Rice)).